The chain runs to 745 residues: GTPase-activating protein GYP7 (745 aa).

The 233-residue stretch at 391 to 623 folds into the Rab-GAP TBC domain; the sequence is LADDATRKEV…NIWEVFFTDF (233 aa).

Its function is as follows. Most effectively accelerate the intrinsic GTPase activity of YPT7. It is also active, but to a lesser extent, on YPT31, YPT32 and YPT1. YPT6 and SEC4. The polypeptide is GTPase-activating protein GYP7 (GYP7) (Candida glabrata (strain ATCC 2001 / BCRC 20586 / JCM 3761 / NBRC 0622 / NRRL Y-65 / CBS 138) (Yeast)).